We begin with the raw amino-acid sequence, 220 residues long: Pyridoxine/pyridoxamine 5'-phosphate oxidase (220 aa).

Residues 13–16 (RVEY) and Lys77 contribute to the substrate site. FMN-binding positions include 72 to 77 (RTVLCK), 87 to 88 (FT), Lys94, and Gln116. Substrate-binding residues include Tyr134, Arg138, and Ser142. FMN contacts are provided by residues 151 to 152 (QS) and Trp197. 203 to 205 (RLH) provides a ligand contact to substrate. Arg207 is a binding site for FMN.

This sequence belongs to the pyridoxamine 5'-phosphate oxidase family. Homodimer. Requires FMN as cofactor.

It carries out the reaction pyridoxamine 5'-phosphate + O2 + H2O = pyridoxal 5'-phosphate + H2O2 + NH4(+). It catalyses the reaction pyridoxine 5'-phosphate + O2 = pyridoxal 5'-phosphate + H2O2. It functions in the pathway cofactor metabolism; pyridoxal 5'-phosphate salvage; pyridoxal 5'-phosphate from pyridoxamine 5'-phosphate: step 1/1. The protein operates within cofactor metabolism; pyridoxal 5'-phosphate salvage; pyridoxal 5'-phosphate from pyridoxine 5'-phosphate: step 1/1. Its function is as follows. Catalyzes the oxidation of either pyridoxine 5'-phosphate (PNP) or pyridoxamine 5'-phosphate (PMP) into pyridoxal 5'-phosphate (PLP). The sequence is that of Pyridoxine/pyridoxamine 5'-phosphate oxidase from Mycolicibacterium paratuberculosis (strain ATCC BAA-968 / K-10) (Mycobacterium paratuberculosis).